A 51-amino-acid chain; its full sequence is Large ribosomal subunit protein eL39 (51 aa).

A disordered region spans residues 32–51 (KRRVTRSPARRHWRRQKLKA).

Belongs to the eukaryotic ribosomal protein eL39 family.

The protein is Large ribosomal subunit protein eL39 of Pyrobaculum calidifontis (strain DSM 21063 / JCM 11548 / VA1).